The primary structure comprises 159 residues: 2-C-methyl-D-erythritol 2,4-cyclodiphosphate synthase (159 aa).

A divalent metal cation-binding residues include Asp-10 and His-12. 4-CDP-2-C-methyl-D-erythritol 2-phosphate is bound by residues 10–12 (DVH) and 36–37 (HS). An a divalent metal cation-binding site is contributed by His-44. Residues 58–60 (DIG), 63–67 (FPDTD), 102–108 (AQAPRMA), 134–137 (TTSE), Phe-141, and Arg-144 contribute to the 4-CDP-2-C-methyl-D-erythritol 2-phosphate site.

Belongs to the IspF family. In terms of assembly, homotrimer. Requires a divalent metal cation as cofactor.

It catalyses the reaction 4-CDP-2-C-methyl-D-erythritol 2-phosphate = 2-C-methyl-D-erythritol 2,4-cyclic diphosphate + CMP. It functions in the pathway isoprenoid biosynthesis; isopentenyl diphosphate biosynthesis via DXP pathway; isopentenyl diphosphate from 1-deoxy-D-xylulose 5-phosphate: step 4/6. In terms of biological role, involved in the biosynthesis of isopentenyl diphosphate (IPP) and dimethylallyl diphosphate (DMAPP), two major building blocks of isoprenoid compounds. Catalyzes the conversion of 4-diphosphocytidyl-2-C-methyl-D-erythritol 2-phosphate (CDP-ME2P) to 2-C-methyl-D-erythritol 2,4-cyclodiphosphate (ME-CPP) with a corresponding release of cytidine 5-monophosphate (CMP). This Cellvibrio japonicus (strain Ueda107) (Pseudomonas fluorescens subsp. cellulosa) protein is 2-C-methyl-D-erythritol 2,4-cyclodiphosphate synthase.